A 448-amino-acid polypeptide reads, in one-letter code: Tryptamine benzoyltransferase 2 (448 aa).

Positions 1–20 (MEITSSAMLKPAPTPTPHPL) are disordered. Catalysis depends on proton acceptor residues histidine 155 and aspartate 386.

This sequence belongs to the plant acyltransferase family.

Hydroxycinnamoyl transferase that catalyzes the transfer of an acyl from benzoyl-CoA to tryptamine, to produce benzoyl tryptamine. Serotonin and tyramine serve as acyl acceptors in vitro. Specific for benzoyl-CoA as acyl donor. Has no activity with p-coumaroyl-CoA, caffeoyl-CoA, or feruloyl-CoA as acyl donors. The protein is Tryptamine benzoyltransferase 2 of Oryza sativa subsp. japonica (Rice).